The chain runs to 311 residues: Zeta-sarcoglycan (311 aa).

The Cytoplasmic portion of the chain corresponds to 1–50; the sequence is MDRSTDLDIQELKMTREQYILATQQNNLPRPENAQLYPVGIYGWRKRCLY. The helical; Signal-anchor for type II membrane protein transmembrane segment at 51–71 threads the bilayer; sequence FFVLLLLVTMIVNLAMTIWIL. Residues 72-311 lie on the Extracellular side of the membrane; sequence KVMNFTVDGM…QSSSSICLWN (240 aa). Asn-75 and Asn-123 each carry an N-linked (GlcNAc...) asparagine glycan. The cysteines at positions 285 and 301 are disulfide-linked.

This sequence belongs to the sarcoglycan beta/delta/gamma/zeta family. In terms of tissue distribution, expressed in the heart, skeletal muscle and arterial vascular smooth muscle.

The protein localises to the cell membrane. The protein resides in the sarcolemma. It is found in the cytoplasm. Its subcellular location is the cytoskeleton. Component of the sarcoglycan complex, a subcomplex of the dystrophin-glycoprotein complex which forms a link between the F-actin cytoskeleton and the extracellular matrix. May play a role in the maintenance of striated muscle membrane stability. The protein is Zeta-sarcoglycan (Sgcz) of Mus musculus (Mouse).